Here is a 265-residue protein sequence, read N- to C-terminus: Anamorsin homolog (265 aa).

The interval 1–147 (MDAAKMYGAV…WKIGSSFALK (147 aa)) is N-terminal SAM-like domain. Residues 147–176 (KKVVKSSPKVQIDFDSDLIDENSLLSEEDL) form a linker region. Residues C186, C195, C198, and C200 each coordinate [2Fe-2S] cluster. Residues 186–200 (CEIGPTRKACKNCSC) form a fe-S binding site A region. [4Fe-4S] cluster contacts are provided by C226, C229, C237, and C240. Short sequence motifs (cx2C motif) lie at residues 226-229 (CGSC) and 237-240 (CSTC). The segment at 226–240 (CGSCGLGDAFRCSTC) is fe-S binding site B.

The protein belongs to the anamorsin family. As to quaternary structure, monomer. Requires [2Fe-2S] cluster as cofactor. [4Fe-4S] cluster serves as cofactor.

It localises to the cytoplasm. It is found in the mitochondrion intermembrane space. Component of the cytosolic iron-sulfur (Fe-S) protein assembly (CIA) machinery. Required for the maturation of extramitochondrial Fe-S proteins. Part of an electron transfer chain functioning in an early step of cytosolic Fe-S biogenesis, facilitating the de novo assembly of a [4Fe-4S] cluster on the cytosolic Fe-S scaffold complex. Electrons are transferred from NADPH via a FAD- and FMN-containing diflavin oxidoreductase. Together with the diflavin oxidoreductase, also required for the assembly of the diferric tyrosyl radical cofactor of ribonucleotide reductase (RNR), probably by providing electrons for reduction during radical cofactor maturation in the catalytic small subunit. The protein is Anamorsin homolog of Medicago truncatula (Barrel medic).